Reading from the N-terminus, the 416-residue chain is UDP-N-acetylmuramoylalanine--D-glutamate ligase (416 aa).

Position 104–110 (104–110 (GSNGKST)) interacts with ATP.

It belongs to the MurCDEF family.

The protein localises to the cytoplasm. It catalyses the reaction UDP-N-acetyl-alpha-D-muramoyl-L-alanine + D-glutamate + ATP = UDP-N-acetyl-alpha-D-muramoyl-L-alanyl-D-glutamate + ADP + phosphate + H(+). The protein operates within cell wall biogenesis; peptidoglycan biosynthesis. Functionally, cell wall formation. Catalyzes the addition of glutamate to the nucleotide precursor UDP-N-acetylmuramoyl-L-alanine (UMA). The sequence is that of UDP-N-acetylmuramoylalanine--D-glutamate ligase from Francisella tularensis subsp. tularensis (strain FSC 198).